Consider the following 252-residue polypeptide: Triosephosphate isomerase (252 aa).

Substrate is bound at residue 10 to 12 (NWK). The active-site Electrophile is H96. E168 acts as the Proton acceptor in catalysis. Residues G174, S213, and 234–235 (GG) contribute to the substrate site.

The protein belongs to the triosephosphate isomerase family. In terms of assembly, homodimer.

Its subcellular location is the cytoplasm. It carries out the reaction D-glyceraldehyde 3-phosphate = dihydroxyacetone phosphate. The protein operates within carbohydrate biosynthesis; gluconeogenesis. It participates in carbohydrate degradation; glycolysis; D-glyceraldehyde 3-phosphate from glycerone phosphate: step 1/1. In terms of biological role, involved in the gluconeogenesis. Catalyzes stereospecifically the conversion of dihydroxyacetone phosphate (DHAP) to D-glyceraldehyde-3-phosphate (G3P). This chain is Triosephosphate isomerase, found in Nitrosomonas europaea (strain ATCC 19718 / CIP 103999 / KCTC 2705 / NBRC 14298).